The chain runs to 120 residues: Chaperonin GroEL (120 aa).

23-27 (DGTTT) is an ATP binding site.

The protein belongs to the chaperonin (HSP60) family. Forms a cylinder of 14 subunits composed of two heptameric rings stacked back-to-back. Interacts with the co-chaperonin GroES.

It localises to the cytoplasm. It catalyses the reaction ATP + H2O + a folded polypeptide = ADP + phosphate + an unfolded polypeptide.. Together with its co-chaperonin GroES, plays an essential role in assisting protein folding. The GroEL-GroES system forms a nano-cage that allows encapsulation of the non-native substrate proteins and provides a physical environment optimized to promote and accelerate protein folding. The polypeptide is Chaperonin GroEL (Mycobacterium intracellulare).